The chain runs to 512 residues: NAD(P)H-quinone oxidoreductase subunit 2 B, chloroplastic (512 aa).

14 helical membrane passes run 31–51, 57–77, 99–119, 124–144, 149–169, 183–203, 229–249, 261–281, 295–315, 323–343, 354–374, 395–415, 418–438, and 484–504; these read FIFP…IDLT, IPWL…ALLF, IFQF…VEYI, MAIT…MFLC, LITI…LSGY, YLLM…WLYG, ISIA…LAPF, PTPV…ALAT, WHLL…LIAI, MLAY…IVGD, YMLF…LFGL, ALSL…AGFF, LYLF…IGLL, and MIVC…IIAI.

The protein belongs to the complex I subunit 2 family. As to quaternary structure, NDH is composed of at least 16 different subunits, 5 of which are encoded in the nucleus.

It localises to the plastid. The protein resides in the chloroplast thylakoid membrane. The enzyme catalyses a plastoquinone + NADH + (n+1) H(+)(in) = a plastoquinol + NAD(+) + n H(+)(out). It carries out the reaction a plastoquinone + NADPH + (n+1) H(+)(in) = a plastoquinol + NADP(+) + n H(+)(out). In terms of biological role, NDH shuttles electrons from NAD(P)H:plastoquinone, via FMN and iron-sulfur (Fe-S) centers, to quinones in the photosynthetic chain and possibly in a chloroplast respiratory chain. The immediate electron acceptor for the enzyme in this species is believed to be plastoquinone. Couples the redox reaction to proton translocation, and thus conserves the redox energy in a proton gradient. The polypeptide is NAD(P)H-quinone oxidoreductase subunit 2 B, chloroplastic (Arabidopsis thaliana (Mouse-ear cress)).